We begin with the raw amino-acid sequence, 440 residues long: Cysteine proteinase (440 aa).

The first 60 residues, 1–60, serve as a signal peptide directing secretion; it reads MYSSSVVSNPNERLVNNRVENDLESSDDTLSTQAKPVSRLLTRKLLLGVVVLFFLAGVSV. The propeptide at 61–229 is activation peptide; that stretch reads VSYFLFSKYK…DEDVDLAKLT (169 aa). The involved in processing to yield active enzymes stretch occupies residues 166–182; the sequence is VKGINRFSDLTEREFYK. Asparagine 206 carries an N-linked (GlcNAc...) asparagine glycan. Cysteine 250 and cysteine 291 form a disulfide bridge. Catalysis depends on residues cysteine 253, histidine 382, and asparagine 404.

The protein belongs to the peptidase C1 family.

The polypeptide is Cysteine proteinase (Theileria parva (East coast fever infection agent)).